Consider the following 327-residue polypeptide: Aspartate--ammonia ligase (327 aa).

This sequence belongs to the class-II aminoacyl-tRNA synthetase family. AsnA subfamily.

Its subcellular location is the cytoplasm. The catalysed reaction is L-aspartate + NH4(+) + ATP = L-asparagine + AMP + diphosphate + H(+). Its pathway is amino-acid biosynthesis; L-asparagine biosynthesis; L-asparagine from L-aspartate (ammonia route): step 1/1. The protein is Aspartate--ammonia ligase of Bacillus cereus (strain G9842).